Here is a 1008-residue protein sequence, read N- to C-terminus: Pheromone-regulated membrane protein 10 (1008 aa).

Disordered regions lie at residues 1–273 (MSQS…TFLG), 342–384 (KLPE…FYTP), and 477–506 (KNDF…TQDE). Residues 70–85 (DTIISNASTTNNSSSD) show a composition bias toward low complexity. Residues 95–111 (GENSNLPNFNFSANQVH) are compositionally biased toward polar residues. Acidic residues-rich tracts occupy residues 116-132 (ANED…EDTF) and 143-161 (GSDE…EDKE). Basic and acidic residues predominate over residues 162 to 186 (EVVNEKEEIADDLHSKSSKTSRESK). Residues 188-204 (FNAGTKNSRRSLNSLQR) are compositionally biased toward polar residues. Over residues 205–214 (NETDVTDQLK) the composition is skewed to basic and acidic residues. Residues 215-225 (RTTSTTSSSKR) are compositionally biased toward low complexity. Positions 226–239 (SNSDKRTGFKDILR) are enriched in basic and acidic residues. Residues 346 to 364 (GTSSDQQLDYSDTSASNLI) show a composition bias toward polar residues. Residues 483 to 498 (GPKRMANKIPGRKHGA) show a composition bias toward basic residues. Transmembrane regions (helical) follow at residues 683–703 (SPWL…PFAF), 707–727 (WYDV…QFFV), 736–756 (SVFE…IGSI), 762–782 (FCFS…YIIL), 800–820 (MFYA…GASL), 838–858 (IKQD…LGLI), 866–886 (LPIM…AGKH), 892–912 (VTEF…NLYS), 917–937 (GMAV…GIAS), and 978–998 (VKVS…VYPF).

Belongs to the ThrE exporter (TC 2.A.79) family.

It is found in the membrane. In Debaryomyces hansenii (strain ATCC 36239 / CBS 767 / BCRC 21394 / JCM 1990 / NBRC 0083 / IGC 2968) (Yeast), this protein is Pheromone-regulated membrane protein 10.